A 122-amino-acid polypeptide reads, in one-letter code: Large ribosomal subunit protein uL14c (122 aa).

This sequence belongs to the universal ribosomal protein uL14 family. Part of the 50S ribosomal subunit.

It localises to the plastid. It is found in the chloroplast. Binds to 23S rRNA. In Marchantia polymorpha (Common liverwort), this protein is Large ribosomal subunit protein uL14c.